The sequence spans 192 residues: Small ribosomal subunit protein uS4c-2 (192 aa).

Residues 91–155 (TRLDHLVYRA…PKPPEYLPPY (65 aa)) form the S4 RNA-binding domain.

It belongs to the universal ribosomal protein uS4 family. Part of the 30S ribosomal subunit. Contacts protein S5. The interaction surface between S4 and S5 is involved in control of translational fidelity.

It localises to the plastid. It is found in the chloroplast. One of the primary rRNA binding proteins, it binds directly to 16S rRNA where it nucleates assembly of the body of the 30S subunit. Functionally, with S5 and S12 plays an important role in translational accuracy. The chain is Small ribosomal subunit protein uS4c-2 from Cyanidium caldarium (Red alga).